The following is a 68-amino-acid chain: Copper transport protein ATOX1 (68 aa).

The HMA domain maps to 1–63 (MPKHEFSVDM…TLKKTGKTVS (63 aa)). C12 and C15 together coordinate Cu cation. Position 47 is a phosphoserine (S47). Residue K60 is modified to N6-acetyllysine.

It belongs to the ATX1 family. In terms of assembly, homodimer. Interacts with ATP7B. Interacts with ATP7A. Interacts (via dimer form) with SLC31A1 (via C-terminal domain); this interaction improves ATOX1 stability and controls intracellular Cu(I) levels. As to expression, ubiquitous.

Binds and deliver cytosolic copper to the copper ATPase proteins. May be important in cellular antioxidant defense. This chain is Copper transport protein ATOX1, found in Homo sapiens (Human).